A 362-amino-acid polypeptide reads, in one-letter code: MRDETPEQPAPLRFGYTTGSCATATSLAAARLLLTGHADDAVEIVLPKGQRVMMRLEFCRTTADGAEAGTIKDAGDDPDVTHGALIFARVARAAAPGVRFHAGPGVGTVTRAGLTLPVGEPAINPVPRQMMTTHLEALAAEHGYAGGFDVTIGVEGGEALALKTMNPRLGIVGGLSILGTTGIVRPFSCSAYIASIHQGIDVARANGITHIAACTGNASEDAMRAHYQLPDMALIEMGDFAGAVLKHLRRAPVARLSMCGGFGKLSKLAAGHLDLHSRHSSIDLPLLAQWAAEAGASDALQAAMRAANTSQEALKLAQADAVPLGDLVCAHALQVARDIVPPSVAVEMFAIDRQGRFVGAAR.

Belongs to the CbiD family.

The catalysed reaction is Co-precorrin-5B + S-adenosyl-L-methionine = Co-precorrin-6A + S-adenosyl-L-homocysteine. Its pathway is cofactor biosynthesis; adenosylcobalamin biosynthesis; cob(II)yrinate a,c-diamide from sirohydrochlorin (anaerobic route): step 6/10. In terms of biological role, catalyzes the methylation of C-1 in cobalt-precorrin-5B to form cobalt-precorrin-6A. This Burkholderia cenocepacia (strain ATCC BAA-245 / DSM 16553 / LMG 16656 / NCTC 13227 / J2315 / CF5610) (Burkholderia cepacia (strain J2315)) protein is Cobalt-precorrin-5B C(1)-methyltransferase.